A 700-amino-acid polypeptide reads, in one-letter code: Beta-galactosidase BgaB (700 aa).

2 residues coordinate substrate: arginine 122 and asparagine 160. The Proton donor role is filled by glutamate 161. Glutamate 320 functions as the Nucleophile in the catalytic mechanism. Substrate is bound by residues tryptophan 328 and 368 to 371 (EAFH).

This sequence belongs to the glycosyl hydrolase 42 family. In terms of assembly, trimer. Tetramer. The N-terminus is blocked.

The enzyme catalyses Hydrolysis of terminal non-reducing beta-D-galactose residues in beta-D-galactosides.. With respect to regulation, inhibited by high substrate concentrations (100 mg/ml). No effect on activity with various EDTA concentrations (0-1 mM). 20-fold higher activity when cells grown on TOS than when cells grown on galactose, glucose and lactose. Its function is as follows. Involved in the hydrolysis of transgalactooligosaccharides (TOS). Highly active towards Gal(beta1-4)Gal and Gal(beta1-4)-Gal-containing oligosaccharides. Low activity towards Gal(beta1-3)Gal, lactose and Gal(beta1-3)GalOMe. No activity towards Gal(beta1-6)Gal, Gal(beta1-4)Man, Gal(alpha1-4)Gal, Gal(alpha1-3)Gal(beta1-4)Gal, lactulose, 3'fucosyllactose, lacto-N-fucopentaose I, lacto-N-fucopentaose II, cellobiose, maltose or sucrose. No transglycosylation activity is found at high substrate concentrations (100 mg/ml) and only low transglycosylation activity at lower substrate concentrations (10 mg/ml). In Bifidobacterium adolescentis (strain ATCC 15703 / DSM 20083 / NCTC 11814 / E194a), this protein is Beta-galactosidase BgaB (bgaB).